The following is a 106-amino-acid chain: UPF0145 protein PSEEN3024 (106 aa).

This sequence belongs to the UPF0145 family.

The protein is UPF0145 protein PSEEN3024 of Pseudomonas entomophila (strain L48).